The chain runs to 290 residues: 4-hydroxy-tetrahydrodipicolinate synthase (290 aa).

Threonine 42 contributes to the pyruvate binding site. Tyrosine 129 (proton donor/acceptor) is an active-site residue. The active-site Schiff-base intermediate with substrate is lysine 157. Isoleucine 198 is a binding site for pyruvate.

Belongs to the DapA family. In terms of assembly, homotetramer; dimer of dimers.

It is found in the cytoplasm. It carries out the reaction L-aspartate 4-semialdehyde + pyruvate = (2S,4S)-4-hydroxy-2,3,4,5-tetrahydrodipicolinate + H2O + H(+). The protein operates within amino-acid biosynthesis; L-lysine biosynthesis via DAP pathway; (S)-tetrahydrodipicolinate from L-aspartate: step 3/4. In terms of biological role, catalyzes the condensation of (S)-aspartate-beta-semialdehyde [(S)-ASA] and pyruvate to 4-hydroxy-tetrahydrodipicolinate (HTPA). The protein is 4-hydroxy-tetrahydrodipicolinate synthase of Chlamydia felis (strain Fe/C-56) (Chlamydophila felis).